A 244-amino-acid chain; its full sequence is Protein crossbronx (244 aa).

Residues 20 to 176 (QQEYKILAEY…VLENIKESKE (157 aa)) enclose the UBC core domain.

This sequence belongs to the ubiquitin-conjugating enzyme family. FTS subfamily.

This is Protein crossbronx (cbx) from Drosophila persimilis (Fruit fly).